Reading from the N-terminus, the 389-residue chain is Putative phosphoserine aminotransferase (389 aa).

Arg45 serves as a coordination point for L-glutamate. Residues 79-80, Trp114, Thr169, Asp191, and Gln214 each bind pyridoxal 5'-phosphate; that span reads GT. Lys215 carries the N6-(pyridoxal phosphate)lysine modification. 265–266 serves as a coordination point for pyridoxal 5'-phosphate; it reads NT.

The protein belongs to the class-V pyridoxal-phosphate-dependent aminotransferase family. SerC subfamily. In terms of assembly, homodimer. Pyridoxal 5'-phosphate serves as cofactor.

It catalyses the reaction O-phospho-L-serine + 2-oxoglutarate = 3-phosphooxypyruvate + L-glutamate. The enzyme catalyses 4-(phosphooxy)-L-threonine + 2-oxoglutarate = (R)-3-hydroxy-2-oxo-4-phosphooxybutanoate + L-glutamate. It participates in amino-acid biosynthesis; L-serine biosynthesis; L-serine from 3-phospho-D-glycerate: step 2/3. Its pathway is cofactor biosynthesis; pyridoxine 5'-phosphate biosynthesis; pyridoxine 5'-phosphate from D-erythrose 4-phosphate: step 3/5. In terms of biological role, catalyzes the reversible conversion of 3-phosphohydroxypyruvate to phosphoserine and of 3-hydroxy-2-oxo-4-phosphonooxybutanoate to phosphohydroxythreonine. The polypeptide is Putative phosphoserine aminotransferase (Schizosaccharomyces pombe (strain 972 / ATCC 24843) (Fission yeast)).